A 378-amino-acid polypeptide reads, in one-letter code: L-lactate dehydrogenase (378 aa).

Residues 1–378 (MIISASTDYR…ELSRDSLVKR (378 aa)) enclose the FMN hydroxy acid dehydrogenase domain. Tyrosine 24 is a substrate binding site. Residues serine 106 and glutamine 127 each coordinate FMN. Residue tyrosine 129 coordinates substrate. Position 155 (threonine 155) interacts with FMN. Residue arginine 164 participates in substrate binding. Residue lysine 251 participates in FMN binding. Histidine 275 acts as the Proton acceptor in catalysis. Arginine 278 contacts substrate. 306 to 330 (DSGIRTGLDVVRMLALGADCTMLGR) provides a ligand contact to FMN.

The protein belongs to the FMN-dependent alpha-hydroxy acid dehydrogenase family. Requires FMN as cofactor.

The protein localises to the cell inner membrane. The enzyme catalyses (S)-lactate + A = pyruvate + AH2. Catalyzes the conversion of L-lactate to pyruvate. Is coupled to the respiratory chain. The polypeptide is L-lactate dehydrogenase (Vibrio cholerae serotype O1 (strain ATCC 39315 / El Tor Inaba N16961)).